Reading from the N-terminus, the 292-residue chain is Phosphoribosylaminoimidazole-succinocarboxamide synthase (292 aa).

This sequence belongs to the SAICAR synthetase family.

The catalysed reaction is 5-amino-1-(5-phospho-D-ribosyl)imidazole-4-carboxylate + L-aspartate + ATP = (2S)-2-[5-amino-1-(5-phospho-beta-D-ribosyl)imidazole-4-carboxamido]succinate + ADP + phosphate + 2 H(+). It participates in purine metabolism; IMP biosynthesis via de novo pathway; 5-amino-1-(5-phospho-D-ribosyl)imidazole-4-carboxamide from 5-amino-1-(5-phospho-D-ribosyl)imidazole-4-carboxylate: step 1/2. This chain is Phosphoribosylaminoimidazole-succinocarboxamide synthase, found in Thermodesulfovibrio yellowstonii (strain ATCC 51303 / DSM 11347 / YP87).